The chain runs to 245 residues: UPF0246 protein cgR_1824 (245 aa).

The protein belongs to the UPF0246 family.

This Corynebacterium glutamicum (strain R) protein is UPF0246 protein cgR_1824.